Reading from the N-terminus, the 707-residue chain is Mitochondrial disaggregase (707 aa).

Residues 1-36 constitute a mitochondrion transit peptide; that stretch reads MLGSLVLRRKALAPRLLLRLLRSPTLRGHGGASGRN. Residues 92–126 are autoinhibitory; it reads PGPEETLPGQDSWNGVPSRAGLGMCALAAALVVHC. ANK repeat units follow at residues 133 to 162, 166 to 195, 265 to 295, and 298 to 327; these read NKDA…DVNA, LGWT…DPNL, KGCT…PLQR, and MGHT…EKQR. The ATP site is built by His346, Ile348, Ser383, Gly384, Ile385, Gly386, Lys387, Thr388, Glu455, and Asn496. Residues 507-535 form a regulatory; slows ATPase and disaggregase activities region; sequence LQLRQEALEMSRNRIAENLGDVQISDKIT. Position 561 (Arg561) interacts with ATP. Lys589 is subject to N6-acetyllysine. Residue Arg620 coordinates ATP.

This sequence belongs to the ClpA/ClpB family. As to quaternary structure, homododecamer when substrate-bound; the homododecamer consists of 2 homohexamers stacked head-to-head via ANK repeat-mediated interactions. The active substrate-bound form is likely to exist in a dynamic equilibrium between homohexamers and homododecamers. Homotetradecamer in the unbound state which is remodeled upon substrate binding into the homododecamer. Interacts with PHB and PHB2. Interacts with MAVS; the interaction is enhanced by Sendai virus infection. Post-translationally, proteolytically cleaved by protease PARL. ATP-dependent protein disaggregase activity is stimulated by PARL-mediated cleavage of the N-terminal autoinhibitory peptide. Widely expressed (at protein level). Expressed in fetal, as well as in adult tissues, with highest levels in adult brain, including thalamus, hippocampus, occipital cortex and parietal cortex. Low expression in granulocytes.

Its subcellular location is the mitochondrion intermembrane space. The enzyme catalyses ATP + H2O = ADP + phosphate + H(+). Disaggregase activity is inhibited by ADP. Functions as a regulatory ATPase and participates in secretion/protein trafficking process. Has ATP-dependent protein disaggregase activity and is required to maintain the solubility of key mitochondrial proteins. Involved in mitochondrial-mediated antiviral innate immunity, activates RIG-I-mediated signal transduction and production of IFNB1 and pro-inflammatory cytokine IL6. Plays a role in granulocyte differentiation. In Homo sapiens (Human), this protein is Mitochondrial disaggregase.